The primary structure comprises 957 residues: Glycine dehydrogenase (decarboxylating) (957 aa).

K708 is subject to N6-(pyridoxal phosphate)lysine.

Belongs to the GcvP family. The glycine cleavage system is composed of four proteins: P, T, L and H. Pyridoxal 5'-phosphate is required as a cofactor.

It carries out the reaction N(6)-[(R)-lipoyl]-L-lysyl-[glycine-cleavage complex H protein] + glycine + H(+) = N(6)-[(R)-S(8)-aminomethyldihydrolipoyl]-L-lysyl-[glycine-cleavage complex H protein] + CO2. In terms of biological role, the glycine cleavage system catalyzes the degradation of glycine. The P protein binds the alpha-amino group of glycine through its pyridoxal phosphate cofactor; CO(2) is released and the remaining methylamine moiety is then transferred to the lipoamide cofactor of the H protein. This chain is Glycine dehydrogenase (decarboxylating), found in Escherichia coli (strain ATCC 8739 / DSM 1576 / NBRC 3972 / NCIMB 8545 / WDCM 00012 / Crooks).